Here is a 304-residue protein sequence, read N- to C-terminus: Lipid droplet-associated hydrolase (304 aa).

The active-site Nucleophile is the Ser119. Residues Asp250 and His279 each act as charge relay system in the active site.

The protein belongs to the AB hydrolase superfamily. LDAH family.

Its subcellular location is the lipid droplet. The catalysed reaction is a cholesterol ester + H2O = cholesterol + a fatty acid + H(+). Probable serine lipid hydrolase associated with lipid droplets. Has low cholesterol esterase activity. Appears to lack triglyceride lipase activity. Involved in cholesterol and triglyceride homeostasis; stimulates cellular triglyceride accumulation and cellular cholesterol release. The protein is Lipid droplet-associated hydrolase of Dictyostelium discoideum (Social amoeba).